The chain runs to 543 residues: Sensor histidine kinase DcuS (543 aa).

The Cytoplasmic portion of the chain corresponds to Met1–Thr20. Residues Val21 to Phe41 traverse the membrane as a helical segment. At Ser42–Trp181 the chain is on the periplasmic side. Residues Arg107 to His110, Lys121, Gly140 to Leu142, and Arg147 each bind (R)-malate. Residues Ser182–Val202 form a helical membrane-spanning segment. Residues Asn203–Arg543 are Cytoplasmic-facing. Residues Leu212–Asp323 form the PAS domain. In terms of domain architecture, Histidine kinase spans Glu346 to Gly538. His349 carries the post-translational modification Phosphohistidine; by autocatalysis.

Homodimer. In terms of processing, autophosphorylated. The phosphoryl group is rapidly transferred to DcuR.

The protein resides in the cell inner membrane. It catalyses the reaction ATP + protein L-histidine = ADP + protein N-phospho-L-histidine.. In terms of biological role, member of the two-component regulatory system DcuR/DcuS. Involved in the C4-dicarboxylate-stimulated regulation of the genes encoding the anaerobic fumarate respiratory system (frdABCD; nuoAN; dcuB; sdhCDAB; etc.). Weakly regulates the aerobic C4-dicarboxylate transporter dctA. Activates DcuR by phosphorylation. This is Sensor histidine kinase DcuS (dcuS) from Escherichia coli O6:H1 (strain CFT073 / ATCC 700928 / UPEC).